Here is a 599-residue protein sequence, read N- to C-terminus: Elongation factor 4 (599 aa).

In terms of domain architecture, tr-type G spans 5-187 (SHIRNFSIIA…VLIKSVPAPV (183 aa)). GTP-binding positions include 17 to 22 (DHGKST) and 134 to 137 (NKID).

It belongs to the TRAFAC class translation factor GTPase superfamily. Classic translation factor GTPase family. LepA subfamily.

Its subcellular location is the cell inner membrane. The catalysed reaction is GTP + H2O = GDP + phosphate + H(+). In terms of biological role, required for accurate and efficient protein synthesis under certain stress conditions. May act as a fidelity factor of the translation reaction, by catalyzing a one-codon backward translocation of tRNAs on improperly translocated ribosomes. Back-translocation proceeds from a post-translocation (POST) complex to a pre-translocation (PRE) complex, thus giving elongation factor G a second chance to translocate the tRNAs correctly. Binds to ribosomes in a GTP-dependent manner. In Saccharophagus degradans (strain 2-40 / ATCC 43961 / DSM 17024), this protein is Elongation factor 4.